A 102-amino-acid chain; its full sequence is Small ribosomal subunit protein uS10 (102 aa).

Belongs to the universal ribosomal protein uS10 family. In terms of assembly, part of the 30S ribosomal subunit.

Its function is as follows. Involved in the binding of tRNA to the ribosomes. This chain is Small ribosomal subunit protein uS10, found in Pyrococcus horikoshii (strain ATCC 700860 / DSM 12428 / JCM 9974 / NBRC 100139 / OT-3).